The following is a 748-amino-acid chain: Wings apart-like protein homolog 1 (748 aa).

2 disordered regions span residues 23 to 199 (TLAQ…VYAT) and 614 to 644 (EGGCGDEEEEEEGGDESSDEDGVRKDGRLDR). Low complexity predominate over residues 35–64 (PSVRSSDSPDVPDTPDVPVNQLSSPPLSLP). Polar residues-rich tracts occupy residues 68–79 (SEGNAETLQNLS) and 87–96 (LSQSSTSSLN). The span at 172-182 (ISSSSNRYSSR) shows a compositional bias: low complexity. The region spanning 205–723 (KPLASGYGSR…KRLYDFTKAT (519 aa)) is the WAPL domain. Residues 616 to 633 (GCGDEEEEEEGGDESSDE) show a composition bias toward acidic residues. Basic and acidic residues predominate over residues 634-644 (DGVRKDGRLDR).

Belongs to the WAPL family.

It is found in the nucleus. Its function is as follows. Regulator of meiotic chromosome structure and function, playing a role in sister chromatid cohesion, possibly via antagonizing the coh-3/-4 association with axial elements in nuclei during late prophase, cohesin association with chromatin, DNA double strand break repair and polar body positioning following meiotic divisions during oogenesis. Regulates the morphogenesis and temporal assembly of axial elements to control the organization of meiotic chromosomes in pachytene nuclei and is also involved in meiotic chromosomal remodeling in late pachytene nuclei. Required for the removal of the cohesin component scc-1 from mitotic chromosomes. This is Wings apart-like protein homolog 1 from Caenorhabditis elegans.